We begin with the raw amino-acid sequence, 323 residues long: Aquaporin-4 (323 aa).

Residues 1 to 36 (MSDRPTARRWGKCGPLCTRENIMVAFKGVWTQAFWK) are Cytoplasmic-facing. Residues Cys13 and Cys17 are each lipidated (S-palmitoyl cysteine). A helical transmembrane segment spans residues 37–57 (AVTAEFLAMLIFVLLSLGSTI). The Extracellular portion of the chain corresponds to 58-69 (NWGGTEKPLPVD). Residues 70 to 89 (MVLISLCFGLSIATMVQCFG) form a helical membrane-spanning segment. Topologically, residues 90–93 (HISG) are cytoplasmic. Residues 94–101 (GHINPAVT) constitute an intramembrane region (discontinuously helical). Residues 97–99 (NPA) carry the NPA 1 motif. At 102-115 (VAMVCTRKISIAKS) the chain is on the cytoplasmic side. The residue at position 111 (Ser111) is a Phosphoserine; by PKG. A helical transmembrane segment spans residues 116–136 (VFYIAAQCLGAIIGAGILYLV). Residues 137–155 (TPPSVVGGLGVTMVHGNLT) are Extracellular-facing. Asn153 carries N-linked (GlcNAc...) asparagine glycosylation. The helical transmembrane segment at 156-176 (AGHGLLVELIITFQLVFTIFA) threads the bilayer. Residues 177-184 (SCDSKRTD) lie on the Cytoplasmic side of the membrane. Ser180 is subject to Phosphoserine; by PKC. A helical membrane pass occupies residues 185-205 (VTGSIALAIGFSVAIGHLFAI). N-linked (GlcNAc...) asparagine glycosylation occurs at Asn206. Topologically, residues 206-208 (NYT) are extracellular. The segment at residues 209–222 (GASMNPARSFGPAV) is an intramembrane region (discontinuously helical). The NPA 2 signature appears at 213 to 215 (NPA). Topologically, residues 223 to 231 (IMGNWENHW) are extracellular. The chain crosses the membrane as a helical span at residues 232-252 (IYWVGPIIGAVLAGGLYEYVF). The Cytoplasmic portion of the chain corresponds to 253–323 (CPDVEFKRRF…DQSGEVLSSV (71 aa)). Residues Ser276 and Ser285 each carry the phosphoserine modification. Thr289 is modified (phosphothreonine). Ser321 carries the phosphoserine modification.

Belongs to the MIP/aquaporin (TC 1.A.8) family. Homotetramer. The tetramers can form oligomeric arrays in membranes. The size of the oligomers differs between tissues and is smaller in skeletal muscle than in brain. Interaction between AQP4 oligomeric arrays in close-by cells can contribute to cell-cell adhesion. Part of a complex containing MLC1, TRPV4, HEPACAM and ATP1B1. Phosphorylation by PKC at Ser-180 reduces conductance by 50%. Phosphorylation by PKG at Ser-111 in response to glutamate increases conductance by 40%. In terms of processing, isoform 2: Palmitoylated on its N-terminal region. Isoform 1: Not palmitoylated. In terms of tissue distribution, detected in skeletal muscle. Detected in stomach, along the glandular base region of the fundic gland (at protein level). Detected in brain, lung and skeletal muscle, and at much lower levels in heart and ovary.

The protein resides in the cell membrane. The protein localises to the basolateral cell membrane. Its subcellular location is the endosome membrane. It is found in the sarcolemma. It localises to the cell projection. The enzyme catalyses H2O(in) = H2O(out). Forms a water-specific channel. Plays an important role in brain water homeostasis. It is involved in glymphatic solute transport and is required for a normal rate of water exchange across the blood brain interface. Required for normal levels of cerebrospinal fluid influx into the brain cortex and parenchyma along paravascular spaces that surround penetrating arteries, and for normal drainage of interstitial fluid along paravenous drainage pathways. Thereby, it is required for normal clearance of solutes from the brain interstitial fluid, including soluble beta-amyloid peptides derived from APP. Plays a redundant role in urinary water homeostasis and urinary concentrating ability. The chain is Aquaporin-4 (AQP4) from Homo sapiens (Human).